The chain runs to 444 residues: Sprouty-related, EVH1 domain-containing protein 1 (444 aa).

N-acetylserine is present on Ser2. Positions Ala6 to Ile123 constitute a WH1 domain. The segment at Ile123–Leu151 is disordered. Residues Glu135–Ser147 show a composition bias toward acidic residues. At Lys224 the chain carries N6-methyllysine. Residues Ser233 to Pro285 enclose the KBD domain. Residues Ser238 and Ser308 each carry the phosphoserine modification. The tract at residues Ser333–Gly444 is required for interaction with TESK1. One can recognise an SPR domain in the interval Arg334–Ala442.

As to quaternary structure, homodimer and heterodimer. Able to interact with SPRED2 to form heterodimers. Interacts (via C-terminus) with TAOK1/MARKK (via C-terminus); the interaction does not affect TAOK1 kinase activity. Interacts (via C-terminus) with TESK1 (via C-terminus); the interaction inhibits TESK1 kinase activity. Interacts with CAV1. Interacts with RAS. Interacts with palmitoyltransferase ZDHHC17/HIP14; the interaction leads to palmitoylation of SPRED1. Post-translationally, palmitoylated by ZDHHC17/HIP14. Phosphorylated on tyrosine. In terms of processing, ubiquitinated. Weakly expressed in embryonic cell line HEK293.

It is found in the cell membrane. The protein resides in the membrane. It localises to the caveola. Its subcellular location is the nucleus. In terms of biological role, tyrosine kinase substrate that inhibits growth-factor-mediated activation of MAP kinase. Negatively regulates hematopoiesis of bone marrow. Inhibits fibroblast growth factor (FGF)-induced retinal lens fiber differentiation, probably by inhibiting FGF-mediated phosphorylation of ERK1/2. Attenuates actin stress fiber formation via inhibition of TESK1-mediated phosphorylation of cofilin. Inhibits TGFB-induced epithelial-to-mesenchymal transition in lens epithelial cells. The polypeptide is Sprouty-related, EVH1 domain-containing protein 1 (SPRED1) (Homo sapiens (Human)).